A 452-amino-acid chain; its full sequence is Enolase (452 aa).

(2R)-2-phosphoglycerate is bound at residue Q167. Catalysis depends on E209, which acts as the Proton donor. Residues D250, E307, and D334 each coordinate Mg(2+). K359, R388, S389, and K410 together coordinate (2R)-2-phosphoglycerate. K359 acts as the Proton acceptor in catalysis.

Belongs to the enolase family. Requires Mg(2+) as cofactor.

It localises to the cytoplasm. The protein localises to the secreted. Its subcellular location is the cell surface. The catalysed reaction is (2R)-2-phosphoglycerate = phosphoenolpyruvate + H2O. It participates in carbohydrate degradation; glycolysis; pyruvate from D-glyceraldehyde 3-phosphate: step 4/5. Functionally, catalyzes the reversible conversion of 2-phosphoglycerate (2-PG) into phosphoenolpyruvate (PEP). It is essential for the degradation of carbohydrates via glycolysis. The protein is Enolase of Mesomycoplasma hyopneumoniae (strain 7448) (Mycoplasma hyopneumoniae).